A 204-amino-acid chain; its full sequence is MFVTAAYAQSSTTEGAEAHDAAAAGEVHTETGVAHEADHGAGVFPPFDTTHFASQLLWLAITFGLFYLLMSKVIIPRIGGILETRHDRIAQDLDEASRLKGEADAAIAAYEQELAGARAKGHSIADTAREAAKAKAKADRDGVEAGLAKKIAAAEARIADIKSKALADVGAIAEETATAVVKQLIGGTVTKAEIAAAFKASAGN.

Positions 8-28 (AQSSTTEGAEAHDAAAAGEVH) are disordered. A helical transmembrane segment spans residues 56-76 (LLWLAITFGLFYLLMSKVIIP).

This sequence belongs to the ATPase B chain family. In terms of assembly, F-type ATPases have 2 components, F(1) - the catalytic core - and F(0) - the membrane proton channel. F(1) has five subunits: alpha(3), beta(3), gamma(1), delta(1), epsilon(1). F(0) has three main subunits: a(1), b(2) and c(10-14). The alpha and beta chains form an alternating ring which encloses part of the gamma chain. F(1) is attached to F(0) by a central stalk formed by the gamma and epsilon chains, while a peripheral stalk is formed by the delta and b chains.

The protein localises to the cell inner membrane. Its function is as follows. F(1)F(0) ATP synthase produces ATP from ADP in the presence of a proton or sodium gradient. F-type ATPases consist of two structural domains, F(1) containing the extramembraneous catalytic core and F(0) containing the membrane proton channel, linked together by a central stalk and a peripheral stalk. During catalysis, ATP synthesis in the catalytic domain of F(1) is coupled via a rotary mechanism of the central stalk subunits to proton translocation. In terms of biological role, component of the F(0) channel, it forms part of the peripheral stalk, linking F(1) to F(0). The b'-subunit is a diverged and duplicated form of b found in plants and photosynthetic bacteria. This Rhizobium meliloti (strain 1021) (Ensifer meliloti) protein is ATP synthase subunit b 2 (atpF2).